Here is a 292-residue protein sequence, read N- to C-terminus: Probable deoxyhypusine synthase (292 aa).

Residue lysine 267 is the Nucleophile of the active site.

The protein belongs to the deoxyhypusine synthase family. NAD(+) serves as cofactor.

It catalyses the reaction [eIF5A protein]-L-lysine + spermidine = [eIF5A protein]-deoxyhypusine + propane-1,3-diamine. Its pathway is protein modification; eIF5A hypusination. In terms of biological role, catalyzes the NAD-dependent oxidative cleavage of spermidine and the subsequent transfer of the butylamine moiety of spermidine to the epsilon-amino group of a specific lysine residue of the eIF-5A precursor protein to form the intermediate deoxyhypusine residue. The polypeptide is Probable deoxyhypusine synthase (dys) (Pyrobaculum aerophilum (strain ATCC 51768 / DSM 7523 / JCM 9630 / CIP 104966 / NBRC 100827 / IM2)).